A 152-amino-acid polypeptide reads, in one-letter code: Ribonuclease H (152 aa).

An RNase H type-1 domain is found at 1–142 (MKEVTIYTDG…CDELARAAIA (142 aa)). 4 residues coordinate Mg(2+): aspartate 9, glutamate 47, aspartate 69, and aspartate 134.

It belongs to the RNase H family. In terms of assembly, monomer. Mg(2+) is required as a cofactor.

Its subcellular location is the cytoplasm. It catalyses the reaction Endonucleolytic cleavage to 5'-phosphomonoester.. Endonuclease that specifically degrades the RNA of RNA-DNA hybrids. The chain is Ribonuclease H from Moorella thermoacetica (strain ATCC 39073 / JCM 9320).